Reading from the N-terminus, the 336-residue chain is Foldase protein PrsA (336 aa).

The first 22 residues, 1–22 (MKSAKKLLSVLCLGIFILTFTA), serve as a signal peptide directing secretion. The N-palmitoyl cysteine moiety is linked to residue cysteine 23. The S-diacylglycerol cysteine moiety is linked to residue cysteine 23. Positions 194 to 286 (PNTMNVSHIL…WGYHIIKVNS (93 aa)) constitute a PpiC domain.

It belongs to the PrsA family.

The protein localises to the cell membrane. The catalysed reaction is [protein]-peptidylproline (omega=180) = [protein]-peptidylproline (omega=0). In terms of biological role, plays a major role in protein secretion by helping the post-translocational extracellular folding of several secreted proteins. In Clostridium botulinum (strain ATCC 19397 / Type A), this protein is Foldase protein PrsA.